The following is a 515-amino-acid chain: 2-isopropylmalate synthase (515 aa).

Residues 4-266 form the Pyruvate carboxyltransferase domain; the sequence is IKFFDTTLRD…ETRLNLQEIK (263 aa). Mn(2+) is bound by residues D13, H201, H203, and N237. Residues 391–515 are regulatory domain; that stretch reads QLSSIQVQYG…RAENEKVTTP (125 aa).

It belongs to the alpha-IPM synthase/homocitrate synthase family. LeuA type 1 subfamily. In terms of assembly, homodimer. It depends on Mn(2+) as a cofactor.

Its subcellular location is the cytoplasm. It catalyses the reaction 3-methyl-2-oxobutanoate + acetyl-CoA + H2O = (2S)-2-isopropylmalate + CoA + H(+). The protein operates within amino-acid biosynthesis; L-leucine biosynthesis; L-leucine from 3-methyl-2-oxobutanoate: step 1/4. Catalyzes the condensation of the acetyl group of acetyl-CoA with 3-methyl-2-oxobutanoate (2-ketoisovalerate) to form 3-carboxy-3-hydroxy-4-methylpentanoate (2-isopropylmalate). This is 2-isopropylmalate synthase from Geobacillus thermodenitrificans (strain NG80-2).